The sequence spans 138 residues: Small ribosomal subunit protein uS8 (138 aa).

Belongs to the universal ribosomal protein uS8 family. In terms of assembly, part of the 30S ribosomal subunit. Contacts proteins S5 and S12.

Functionally, one of the primary rRNA binding proteins, it binds directly to 16S rRNA central domain where it helps coordinate assembly of the platform of the 30S subunit. In Thermus thermophilus (strain ATCC BAA-163 / DSM 7039 / HB27), this protein is Small ribosomal subunit protein uS8 (rpsH).